The following is a 348-amino-acid chain: Tetraacyldisaccharide 4'-kinase (348 aa).

Residue 65–72 coordinates ATP; the sequence is VAGGAGKT. A disordered region spans residues 89–117; it reads PGIVSRGHGSREREARPVSADSTAQSVGD.

Belongs to the LpxK family.

It catalyses the reaction a lipid A disaccharide + ATP = a lipid IVA + ADP + H(+). Its pathway is glycolipid biosynthesis; lipid IV(A) biosynthesis; lipid IV(A) from (3R)-3-hydroxytetradecanoyl-[acyl-carrier-protein] and UDP-N-acetyl-alpha-D-glucosamine: step 6/6. Its function is as follows. Transfers the gamma-phosphate of ATP to the 4'-position of a tetraacyldisaccharide 1-phosphate intermediate (termed DS-1-P) to form tetraacyldisaccharide 1,4'-bis-phosphate (lipid IVA). In Leptothrix cholodnii (strain ATCC 51168 / LMG 8142 / SP-6) (Leptothrix discophora (strain SP-6)), this protein is Tetraacyldisaccharide 4'-kinase.